Here is a 271-residue protein sequence, read N- to C-terminus: Phosphate import ATP-binding protein PstB (271 aa).

The ABC transporter domain occupies 24–266 (MIGQDVSVYY…PDDPRTQDYI (243 aa)). 56–63 (GPSGCGKS) is a binding site for ATP.

It belongs to the ABC transporter superfamily. Phosphate importer (TC 3.A.1.7) family. In terms of assembly, the complex is composed of two ATP-binding proteins (PstB), two transmembrane proteins (PstC and PstA) and a solute-binding protein (PstS).

The protein resides in the cell inner membrane. It catalyses the reaction phosphate(out) + ATP + H2O = ADP + 2 phosphate(in) + H(+). In terms of biological role, part of the ABC transporter complex PstSACB involved in phosphate import. Responsible for energy coupling to the transport system. The polypeptide is Phosphate import ATP-binding protein PstB (Rhizobium etli (strain ATCC 51251 / DSM 11541 / JCM 21823 / NBRC 15573 / CFN 42)).